Reading from the N-terminus, the 325-residue chain is Putative metal ion transporter ZIPCO (325 aa).

The next 3 helical transmembrane spans lie at 5–25 (TFLA…PAYI), 46–66 (IASG…VIIL), and 74–94 (LYYI…TDIL). Residues Asn-106 and Asn-160 are each glycosylated (N-linked (GlcNAc...) asparagine). 4 consecutive transmembrane segments (helical) span residues 179-199 (FFIV…MGSL), 239-259 (IYAW…IFSF), 264-284 (FVEI…SFNM), and 296-316 (HFIS…MILF).

It localises to the cytoplasmic vesicle membrane. Putative transporter for the divalent zinc and iron cations. This Plasmodium falciparum (isolate 3D7) protein is Putative metal ion transporter ZIPCO.